We begin with the raw amino-acid sequence, 693 residues long: MRVLGLFERGNNLNFADTYVYTWNQQYSYHENAFLISNQVATTIILYLDGININEVNKAFELLNSNGIPALIIKPDHIGIFTSSNFTYDWQYKIVYFHEYTYYKNNEFIVSDEFWLYTNINELLPYKILYYERGMRELYAGREYTLYNTATDDDILYKYIYEKDSIMNGTDYKKLYDTNSVKNFVHFMRLLRMRFAVPFDQLSNRITRSRVFSKSRIHIGLRNESIPQALDNIHSQWINYSANGIVISELKGLGSYSEKKISEFGIGQFKNYMNFLTLMFYIKNMKKKPSCTIIGAAPGYWISSMKKYFTIVTYDNKEVDSTEHHNRYFTDDDIVNVKTNGVYIDVRSEFKTNDWRQRRKLIEEETIKWLEISYKLLENKRVEAILLKMTAMDGEIPDGYCVHSPTTYRKSEYYLLIDKHIIKRQKIKVTKSLMYNAINTIYSDNVFISGKYSLRGKTEGVLALYCLSNTINQKEKVIQYANSFSGTCMTVRLNNTYEVDKIIDFKTNSDHTFLPSDFTCSLNTILTSYRGYAGIFGYAITKDLKSNGNNHIYIIPNARDENNFDTFGSHLGLSRYSHSKRFSESATTMSGYIFRDMVSGKENMQDTDKDNYASGHVFNAIAHYRFDYTYDIVGWLRLHKTGQFKVKSDIYKEHTDSEIRNAIESAYVYYLLDGDKVGEKYSKKMMEIWEVQV.

The interval 187–255 (FMRLLRMRFA…VISELKGLGS (69 aa)) is N7-methyltransferase activity. The interval 256-432 (YSEKKISEFG…KRQKIKVTKS (177 aa)) is 2'-O-methyltransferase activity. Residues 433–559 (LMYNAINTIY…NHIYIIPNAR (127 aa)) are N7-methyltransferase activity. The interval 560–693 (DENNFDTFGS…KMMEIWEVQV (134 aa)) is GTase/RTPase activity.

Belongs to the rotavirus VP3 family. In terms of assembly, interacts with VP1. Interacts with VP2.

It localises to the virion. The enzyme catalyses a 5'-end diphospho-ribonucleoside in mRNA + GTP + H(+) = a 5'-end (5'-triphosphoguanosine)-ribonucleoside in mRNA + diphosphate. It carries out the reaction a 5'-end (5'-triphosphoguanosine)-ribonucleoside in mRNA + S-adenosyl-L-methionine = a 5'-end (N(7)-methyl 5'-triphosphoguanosine)-ribonucleoside in mRNA + S-adenosyl-L-homocysteine. Functionally, multifunctional enzyme involved in mRNA capping. Catalyzes the formation of the 5' cap structure on the viral plus-strand transcripts. Specifically binds to GTP and displays guanylyltransferase and methyltransferase activities. Has affinity for ssRNA but not for dsRNA. Capping activity is non-specific and caps RNAs that initiate with either a G or an A residue. Together with VP1 polymerase, forms a VP1-VP3 complex positioned near the channels situated at each of the five-fold vertices of the core. Following infection, the outermost layer of the virus is lost, leaving a double-layered particle (DLP) made up of the core and VP6 shell. VP1 then catalyzes the transcription of fully conservative plus-strand genomic RNAs that are capped by VP3 and extruded through the DLP's channels into the cytoplasm where they function as mRNAs for translation of viral proteins. DLPs probably have an RNA triphosphatase activity as well, whereas open cores do not. This is Protein VP3 from Homo sapiens (Human).